We begin with the raw amino-acid sequence, 575 residues long: Chaperonin 60 subunit alpha 2, chloroplastic (575 aa).

The segment covering methionine 1 to arginine 18 has biased composition (low complexity). Positions methionine 1–lysine 27 are disordered. Residues methionine 1–arginine 32 constitute a chloroplast transit peptide.

It belongs to the chaperonin (HSP60) family. In terms of assembly, part of the Cpn60 complex composed of 7 alpha and 7 beta subunits.

Its subcellular location is the plastid. It is found in the chloroplast. In terms of biological role, involved in protein assisted folding. The chain is Chaperonin 60 subunit alpha 2, chloroplastic (CPN60A2) from Arabidopsis thaliana (Mouse-ear cress).